Here is a 412-residue protein sequence, read N- to C-terminus: MNKIKVVELFAGVGGFRLGLENTKNGIFDITWANQWEPSRKIQHAFDCYSKRFKNGIHSNKDIAQVSDEEMANTEADMIVGGFPCQDYSVARSLNGELGIQGKKGVLFWQIIRYIQNTFPKYLLLENVDRLLKSPSSQRGRDFAVMLSTLNELGYNVEWRVINAADYGNAQRRRRVFIFGYKQDLNYSKAMEESPLDKIIYHNGLFAEAFPIEDYANKNRVNRTHITHDIVDISDNFSFQFYNSGIMKNGEILTIDTIPKYEKSVTLGEIIESNVDDGFSLNQDQIDKFKYLRGPKKIKRTTKDGHEYYFSEGGMSETDSLELPARTMLTSESSINRSTHFLNVDGVYRTLTPIEAERLNGFPDNWTEGMPIKMRYFCMGNALVVPLITRIGNQIEKIDSITNDEFSQLRLF.

The SAM-dependent MTase C5-type domain maps to 4-402 (IKVVELFAGV…NQIEKIDSIT (399 aa)). Cys85 is a catalytic residue.

The protein belongs to the class I-like SAM-binding methyltransferase superfamily. C5-methyltransferase family.

It carries out the reaction a 2'-deoxycytidine in DNA + S-adenosyl-L-methionine = a 5-methyl-2'-deoxycytidine in DNA + S-adenosyl-L-homocysteine + H(+). A methylase that recognizes the double-stranded sequence 5'-GATC-3', methylates C-4 on both strands and protects the DNA from cleavage by the Sau3AI endonuclease. The sequence is that of Type II methyltransferase M.Sau3AI (sau3AIM) from Staphylococcus aureus.